A 431-amino-acid polypeptide reads, in one-letter code: Tol-Pal system protein TolB (431 aa).

Residues 1–26 (MSLMTKLGFRALVASCLIAAGSAANA) form the signal peptide. The tract at residues 411–431 (PQILSVQGGSVREPSWGPFMQ) is disordered.

Belongs to the TolB family. As to quaternary structure, the Tol-Pal system is composed of five core proteins: the inner membrane proteins TolA, TolQ and TolR, the periplasmic protein TolB and the outer membrane protein Pal. They form a network linking the inner and outer membranes and the peptidoglycan layer.

It is found in the periplasm. Part of the Tol-Pal system, which plays a role in outer membrane invagination during cell division and is important for maintaining outer membrane integrity. This Burkholderia multivorans (strain ATCC 17616 / 249) protein is Tol-Pal system protein TolB.